The chain runs to 309 residues: Aspartate carbamoyltransferase catalytic subunit (309 aa).

Residues Arg-55 and Thr-56 each contribute to the carbamoyl phosphate site. Residue Lys-85 coordinates L-aspartate. Arg-106, His-135, and Gln-138 together coordinate carbamoyl phosphate. Residues Arg-168 and Arg-230 each contribute to the L-aspartate site. Carbamoyl phosphate is bound by residues Leu-268 and Pro-269.

The protein belongs to the aspartate/ornithine carbamoyltransferase superfamily. ATCase family. In terms of assembly, heterododecamer (2C3:3R2) of six catalytic PyrB chains organized as two trimers (C3), and six regulatory PyrI chains organized as three dimers (R2).

The enzyme catalyses carbamoyl phosphate + L-aspartate = N-carbamoyl-L-aspartate + phosphate + H(+). Its pathway is pyrimidine metabolism; UMP biosynthesis via de novo pathway; (S)-dihydroorotate from bicarbonate: step 2/3. Catalyzes the condensation of carbamoyl phosphate and aspartate to form carbamoyl aspartate and inorganic phosphate, the committed step in the de novo pyrimidine nucleotide biosynthesis pathway. This Photobacterium profundum (strain SS9) protein is Aspartate carbamoyltransferase catalytic subunit.